A 246-amino-acid polypeptide reads, in one-letter code: tRNA (guanine-N(7)-)-methyltransferase (246 aa).

S-adenosyl-L-methionine-binding residues include glutamate 77, glutamate 102, aspartate 129, and aspartate 152. Residue aspartate 152 is part of the active site. Substrate-binding positions include lysine 156, aspartate 188, and 225–228 (TKFE).

The protein belongs to the class I-like SAM-binding methyltransferase superfamily. TrmB family.

The enzyme catalyses guanosine(46) in tRNA + S-adenosyl-L-methionine = N(7)-methylguanosine(46) in tRNA + S-adenosyl-L-homocysteine. Its pathway is tRNA modification; N(7)-methylguanine-tRNA biosynthesis. Its function is as follows. Catalyzes the formation of N(7)-methylguanine at position 46 (m7G46) in tRNA. This Haemophilus influenzae (strain PittEE) protein is tRNA (guanine-N(7)-)-methyltransferase.